Here is a 212-residue protein sequence, read N- to C-terminus: External core antigen (212 aa).

A signal peptide spans 1-19 (MQLFHLCLIISCSCPTVQA). Positions 25 to 27 (GWL) are HBEAG. The interval 172-212 (LPETTVVRRRGRSPRRRTPSPRRRRSQSPRRRRSQSRESQC) is disordered. The span at 178 to 205 (VRRRGRSPRRRTPSPRRRRSQSPRRRRS) shows a compositional bias: basic residues. Residues 184–190 (SPRRRTP) form a 1; half-length repeat. Positions 184-206 (SPRRRTPSPRRRRSQSPRRRRSQ) are 3 X 8 AA repeats of S-P-R-R-R-R-S-Q. A propeptide spanning residues 184–212 (SPRRRTPSPRRRRSQSPRRRRSQSRESQC) is cleaved from the precursor. Tandem repeats lie at residues 191 to 198 (SPRRRRSQ) and 199 to 206 (SPRRRRSQ).

This sequence belongs to the orthohepadnavirus precore antigen family. Homodimerizes. Phosphorylated. Post-translationally, cleaved by host furin.

It is found in the secreted. It localises to the host nucleus. May regulate immune response to the intracellular capsid in acting as a T-cell tolerogen, by having an immunoregulatory effect which prevents destruction of infected cells by cytotoxic T-cells. This immune regulation may predispose to chronicity during perinatal infections and prevent severe liver injury during adult infections. In Hepatitis B virus genotype D (isolate Germany/1-91/1991) (HBV-D), this protein is External core antigen.